Here is a 300-residue protein sequence, read N- to C-terminus: Ribosomal protein bS6--L-glutamate ligase (300 aa).

An ATP-grasp domain is found at 104–287 (MQLLARQGID…IAGKMIRWIE (184 aa)). Residues lysine 141, 178–179 (EY), aspartate 187, and 211–213 (RSN) each bind ATP. Mg(2+)-binding residues include aspartate 248, glutamate 260, and asparagine 262. Residues aspartate 248, glutamate 260, and asparagine 262 each coordinate Mn(2+).

Belongs to the RimK family. The cofactor is Mg(2+). Requires Mn(2+) as cofactor.

Its function is as follows. An L-glutamate ligase that catalyzes the ATP-dependent post-translational addition of glutamate residues to the C-terminus of ribosomal protein bS6 (RpsF). Is also able to catalyze the synthesis of poly-alpha-glutamate in vitro, via ATP hydrolysis from unprotected glutamate as substrate. The number of glutamate residues added to either RpsF or to poly-alpha-glutamate changes with pH. The protein is Ribosomal protein bS6--L-glutamate ligase of Shigella boydii serotype 18 (strain CDC 3083-94 / BS512).